Here is a 350-residue protein sequence, read N- to C-terminus: tRNA uridine(34) hydroxylase (350 aa).

The Rhodanese domain occupies 146-240 (DDPDALFIDM…YARKAREQGL (95 aa)). The Cysteine persulfide intermediate role is filled by cysteine 200.

Belongs to the TrhO family.

The catalysed reaction is uridine(34) in tRNA + AH2 + O2 = 5-hydroxyuridine(34) in tRNA + A + H2O. Its function is as follows. Catalyzes oxygen-dependent 5-hydroxyuridine (ho5U) modification at position 34 in tRNAs. The polypeptide is tRNA uridine(34) hydroxylase (Escherichia fergusonii (strain ATCC 35469 / DSM 13698 / CCUG 18766 / IAM 14443 / JCM 21226 / LMG 7866 / NBRC 102419 / NCTC 12128 / CDC 0568-73)).